A 162-amino-acid polypeptide reads, in one-letter code: Deoxyuridine 5'-triphosphate nucleotidohydrolase (162 aa).

S11 is modified (phosphoserine). DUTP contacts are provided by residues 83 to 85, 97 to 103, G108, R151, and 156 to 157; these read RSG, GVIDEDY, and FG.

Belongs to the dUTPase family. Homotrimer. Mg(2+) serves as cofactor. Post-translationally, phosphorylated in vivo on Ser-11, a reaction that can be catalyzed in vitro by CDC2.

The protein resides in the nucleus. It catalyses the reaction dUTP + H2O = dUMP + diphosphate + H(+). Its pathway is pyrimidine metabolism; dUMP biosynthesis; dUMP from dCTP (dUTP route): step 2/2. In terms of biological role, catalyzes the cleavage of 2'-deoxyuridine 5'-triphosphate (dUTP) into 2'-deoxyuridine 5'-monophosphate (dUMP) and inorganic pyrophosphate and through its action efficiently prevents uracil misincorporation into DNA and at the same time provides dUMP, the substrate for de novo thymidylate biosynthesis. Inhibits peroxisome proliferator-activated receptor (PPAR) activity by binding of its N-terminal to PPAR, preventing the latter's dimerization with retinoid X receptor. Essential for embryonic development. The polypeptide is Deoxyuridine 5'-triphosphate nucleotidohydrolase (Dut) (Mus musculus (Mouse)).